The sequence spans 170 residues: Shikimate kinase (170 aa).

11 to 16 serves as a coordination point for ATP; that stretch reads LSGKST. Residue serine 15 coordinates Mg(2+). Residues aspartate 33, arginine 57, and glycine 79 each coordinate substrate. Arginine 119 is a binding site for ATP. Arginine 137 contributes to the substrate binding site.

This sequence belongs to the shikimate kinase family. As to quaternary structure, monomer. It depends on Mg(2+) as a cofactor.

The protein resides in the cytoplasm. The catalysed reaction is shikimate + ATP = 3-phosphoshikimate + ADP + H(+). It participates in metabolic intermediate biosynthesis; chorismate biosynthesis; chorismate from D-erythrose 4-phosphate and phosphoenolpyruvate: step 5/7. Functionally, catalyzes the specific phosphorylation of the 3-hydroxyl group of shikimic acid using ATP as a cosubstrate. In Clostridium botulinum (strain Kyoto / Type A2), this protein is Shikimate kinase.